The chain runs to 874 residues: Bifunctional uridylyltransferase/uridylyl-removing enzyme (874 aa).

Positions 1–332 (MPLQSPLTFS…NGGATENAEI (332 aa)) are uridylyltransferase. The segment at 333–692 (LDADFQRRGS…ISKKATRGGT (360 aa)) is uridylyl-removing. Positions 451 to 573 (VDEHSIRLLK…VRDEESLEYL (123 aa)) constitute an HD domain. ACT domains follow at residues 693-777 (EVFV…RTPN) and 800-874 (LMEF…AVTA).

This sequence belongs to the GlnD family. It depends on Mg(2+) as a cofactor.

The enzyme catalyses [protein-PII]-L-tyrosine + UTP = [protein-PII]-uridylyl-L-tyrosine + diphosphate. It carries out the reaction [protein-PII]-uridylyl-L-tyrosine + H2O = [protein-PII]-L-tyrosine + UMP + H(+). With respect to regulation, uridylyltransferase (UTase) activity is inhibited by glutamine, while glutamine activates uridylyl-removing (UR) activity. Functionally, modifies, by uridylylation and deuridylylation, the PII regulatory proteins (GlnB and homologs), in response to the nitrogen status of the cell that GlnD senses through the glutamine level. Under low glutamine levels, catalyzes the conversion of the PII proteins and UTP to PII-UMP and PPi, while under higher glutamine levels, GlnD hydrolyzes PII-UMP to PII and UMP (deuridylylation). Thus, controls uridylylation state and activity of the PII proteins, and plays an important role in the regulation of nitrogen assimilation and metabolism. The polypeptide is Bifunctional uridylyltransferase/uridylyl-removing enzyme (Vibrio parahaemolyticus serotype O3:K6 (strain RIMD 2210633)).